Reading from the N-terminus, the 206-residue chain is Large ribosomal subunit protein uL4 (206 aa).

The protein belongs to the universal ribosomal protein uL4 family. As to quaternary structure, part of the 50S ribosomal subunit.

In terms of biological role, one of the primary rRNA binding proteins, this protein initially binds near the 5'-end of the 23S rRNA. It is important during the early stages of 50S assembly. It makes multiple contacts with different domains of the 23S rRNA in the assembled 50S subunit and ribosome. Its function is as follows. Forms part of the polypeptide exit tunnel. This chain is Large ribosomal subunit protein uL4, found in Bradyrhizobium sp. (strain BTAi1 / ATCC BAA-1182).